The chain runs to 229 residues: Triosephosphate isomerase (229 aa).

16–18 (NFK) is a binding site for substrate. The Electrophile role is filled by His100. Glu148 functions as the Proton acceptor in the catalytic mechanism. Residues Ile153, Gly188, and 209–210 (AS) contribute to the substrate site.

The protein belongs to the triosephosphate isomerase family. As to quaternary structure, homotetramer; dimer of dimers.

The protein resides in the cytoplasm. It catalyses the reaction D-glyceraldehyde 3-phosphate = dihydroxyacetone phosphate. The protein operates within carbohydrate biosynthesis; gluconeogenesis. Its pathway is carbohydrate degradation; glycolysis; D-glyceraldehyde 3-phosphate from glycerone phosphate: step 1/1. Its function is as follows. Involved in the gluconeogenesis. Catalyzes stereospecifically the conversion of dihydroxyacetone phosphate (DHAP) to D-glyceraldehyde-3-phosphate (G3P). The polypeptide is Triosephosphate isomerase (Methanothermobacter thermautotrophicus (strain ATCC 29096 / DSM 1053 / JCM 10044 / NBRC 100330 / Delta H) (Methanobacterium thermoautotrophicum)).